The following is a 306-amino-acid chain: Putative S-adenosyl-L-methionine-dependent methyltransferase MAP_4190c (306 aa).

S-adenosyl-L-methionine-binding positions include Asp-129 and 158-159; that span reads DL.

The protein belongs to the UPF0677 family.

In terms of biological role, exhibits S-adenosyl-L-methionine-dependent methyltransferase activity. The sequence is that of Putative S-adenosyl-L-methionine-dependent methyltransferase MAP_4190c from Mycolicibacterium paratuberculosis (strain ATCC BAA-968 / K-10) (Mycobacterium paratuberculosis).